A 223-amino-acid polypeptide reads, in one-letter code: Endonuclease V (223 aa).

2 residues coordinate Mg(2+): Asp35 and Asp103.

It belongs to the endonuclease V family. Mg(2+) serves as cofactor.

The protein resides in the cytoplasm. The enzyme catalyses Endonucleolytic cleavage at apurinic or apyrimidinic sites to products with a 5'-phosphate.. In terms of biological role, DNA repair enzyme involved in the repair of deaminated bases. Selectively cleaves double-stranded DNA at the second phosphodiester bond 3' to a deoxyinosine leaving behind the intact lesion on the nicked DNA. The polypeptide is Endonuclease V (Salmonella paratyphi A (strain ATCC 9150 / SARB42)).